The following is a 276-amino-acid chain: Tyrosinase (276 aa).

Cu cation-binding residues include His38, His56, His66, His193, His197, and His219.

The protein belongs to the tyrosinase family. Cu(2+) serves as cofactor.

The catalysed reaction is 2 L-dopa + O2 = 2 L-dopaquinone + 2 H2O. It catalyses the reaction L-tyrosine + O2 = L-dopaquinone + H2O. Functionally, this is a copper-containing oxidase that functions in the formation of pigments such as melanins and other polyphenolic compounds. The chain is Tyrosinase (melC2) from Streptomyces galbus.